A 239-amino-acid chain; its full sequence is MVIKAQSPAGFAEEYIIESIWNNRFPPGSILPAERELSELIGVTRTTLREVLQRLARDGWLTIQHGKPTKVNNFWETSGLNILETLARLDHDSVPQLIDNLLSVRTNISTIFIRTAFRQHPDKALAVLDSAREVEDHADAFADLDYNIFRGLAFASGNPIYGLILNGMKGLYTRIGRHYFSSPEARSLALGFYHQLAKVCEGGLHDQVYELVRRYGHDSGEIWHRMQKSLPGDLAMNMR.

In terms of domain architecture, HTH gntR-type spans 6–74 (QSPAGFAEEY…HGKPTKVNNF (69 aa)). A DNA-binding region (H-T-H motif) is located at residues 34–53 (ERELSELIGVTRTTLREVLQ).

As to quaternary structure, homodimer.

The protein resides in the cytoplasm. In terms of biological role, multifunctional regulator of fatty acid metabolism. This is Fatty acid metabolism regulator protein from Klebsiella pneumoniae (strain 342).